A 249-amino-acid polypeptide reads, in one-letter code: 23S rRNA (guanosine-2'-O-)-methyltransferase RlmB (249 aa).

S-adenosyl-L-methionine contacts are provided by G200, I220, and L229.

The protein belongs to the class IV-like SAM-binding methyltransferase superfamily. RNA methyltransferase TrmH family. RlmB subfamily.

It is found in the cytoplasm. The enzyme catalyses guanosine(2251) in 23S rRNA + S-adenosyl-L-methionine = 2'-O-methylguanosine(2251) in 23S rRNA + S-adenosyl-L-homocysteine + H(+). Its function is as follows. Specifically methylates the ribose of guanosine 2251 in 23S rRNA. The sequence is that of 23S rRNA (guanosine-2'-O-)-methyltransferase RlmB from Xanthomonas campestris pv. campestris (strain ATCC 33913 / DSM 3586 / NCPPB 528 / LMG 568 / P 25).